Reading from the N-terminus, the 350-residue chain is Nicotinate-nucleotide--dimethylbenzimidazole phosphoribosyltransferase (350 aa).

The active-site Proton acceptor is E318.

It belongs to the CobT family.

It carries out the reaction 5,6-dimethylbenzimidazole + nicotinate beta-D-ribonucleotide = alpha-ribazole 5'-phosphate + nicotinate + H(+). It participates in nucleoside biosynthesis; alpha-ribazole biosynthesis; alpha-ribazole from 5,6-dimethylbenzimidazole: step 1/2. Its function is as follows. Catalyzes the synthesis of alpha-ribazole-5'-phosphate from nicotinate mononucleotide (NAMN) and 5,6-dimethylbenzimidazole (DMB). The sequence is that of Nicotinate-nucleotide--dimethylbenzimidazole phosphoribosyltransferase from Citrifermentans bemidjiense (strain ATCC BAA-1014 / DSM 16622 / JCM 12645 / Bem) (Geobacter bemidjiensis).